Here is a 167-residue protein sequence, read N- to C-terminus: Transmembrane protein 229B (167 aa).

Residues 1-14 (MASAEPLTALSRWY) lie on the Cytoplasmic side of the membrane. A helical membrane pass occupies residues 15–35 (LYAIHGYFCEVMFTAAWEFVV). The Extracellular segment spans residues 36–40 (NFNWK). The chain crosses the membrane as a helical span at residues 41–61 (FPGVTSVWALFIYGTSILIVE). Topologically, residues 62–73 (RMYLRLRGRCPL) are cytoplasmic. Residues 74–94 (LVRCVIYTLWTYLWEFTTGFI) form a helical membrane-spanning segment. Topologically, residues 95 to 109 (LRQFNACPWDYSQFD) are extracellular. The chain crosses the membrane as a helical span at residues 110 to 130 (FDFMGLITLEYAVPWFCGALI). The Cytoplasmic portion of the chain corresponds to 131 to 167 (MEQFIIRNTLRLRFDKDAEPGEPASPPALANGHVKTD). Residues 148-167 (AEPGEPASPPALANGHVKTD) form a disordered region.

This sequence belongs to the TMEM229 family.

The protein localises to the membrane. The protein is Transmembrane protein 229B (TMEM229B) of Mus musculus (Mouse).